Here is a 968-residue protein sequence, read N- to C-terminus: RNA polymerase-associated protein RapA (968 aa).

Positions 164–334 (DVGRRHAPRV…FARLRLLDPN (171 aa)) constitute a Helicase ATP-binding domain. Residue 177 to 184 (DEVGLGKT) participates in ATP binding. A DEAH box motif is present at residues 280 to 283 (DEAH). A Helicase C-terminal domain is found at 490 to 662 (RVEWLMGYLT…YLAAPENTEG (173 aa)).

Belongs to the SNF2/RAD54 helicase family. RapA subfamily. Interacts with the RNAP. Has a higher affinity for the core RNAP than for the holoenzyme. Its ATPase activity is stimulated by binding to RNAP.

In terms of biological role, transcription regulator that activates transcription by stimulating RNA polymerase (RNAP) recycling in case of stress conditions such as supercoiled DNA or high salt concentrations. Probably acts by releasing the RNAP, when it is trapped or immobilized on tightly supercoiled DNA. Does not activate transcription on linear DNA. Probably not involved in DNA repair. The chain is RNA polymerase-associated protein RapA from Cronobacter sakazakii (strain ATCC BAA-894) (Enterobacter sakazakii).